Reading from the N-terminus, the 1429-residue chain is Nitric oxide synthase 1 (1429 aa).

The segment at 1–200 (MEEHTFGVQQ…LQDSGEQDEL (200 aa)) is interaction with NOSIP. The PDZ domain occupies 17–99 (SVRLFKRKVG…ETHVVLILRG (83 aa)). Disordered regions lie at residues 114–174 (DGTP…SVSQ) and 271–298 (NNPY…SRCP). An interaction with DYNLL1/PIN region spans residues 163-240 (QGRGQGAGSV…TGIQVDRDLD (78 aa)). The segment covering 272 to 294 (NPYSENEQSPASGKQSPTKNGSP) has biased composition (polar residues). S280 carries the phosphoserine modification. S334 provides a ligand contact to (6R)-L-erythro-5,6,7,8-tetrahydrobiopterin. C415 contributes to the heme b binding site. L-arginine-binding residues include Q478, W587, Y588, and E592. Residues V677, W678, and F691 each contribute to the (6R)-L-erythro-5,6,7,8-tetrahydrobiopterin site. Heme b is bound at residue Y706. Positions 725–745 (KRRAIGFKKLAEAVKFSAKLM) are calmodulin-binding. The region spanning 755-935 (ATILYATETG…AFRTWAKKVF (181 aa)) is the Flavodoxin-like domain. Residues T761, E762, T763, K765, S766, S807, T808, and G812 each coordinate FMN. Residues S847, S857, and S858 each carry the phosphoserine modification. The FMN site is built by S886, H891, C893, E919, and Q923. The 248-residue stretch at 990-1237 (KRVSAARLLS…VRGAPSFHLP (248 aa)) folds into the FAD-binding FR-type domain. NADP(+) is bound at residue R1010. Positions 1032, 1173, 1174, 1175, 1176, 1191, and 1193 each coordinate FAD. Residue S1196 coordinates NADP(+). Y1197, V1210, C1211, and S1212 together coordinate FAD. T1251, R1284, S1313, R1314, K1320, Y1322, Q1324, D1357, T1398, and R1400 together coordinate NADP(+).

This sequence belongs to the NOS family. As to quaternary structure, homodimer. Interacts with DLG4; the interaction possibly being prevented by the association between NOS1 and CAPON. Forms a ternary complex with CAPON and RASD1. Forms a ternary complex with CAPON and SYN1. Interacts with ZDHHC23. Interacts with NOSIP; which may impair its synaptic location. Interacts with HTR4. Interacts with VAC14. Interacts (via N-terminal domain) with DLG4 (via N-terminal tandem pair of PDZ domains). Interacts with SLC6A4. Forms a complex with ASL, ASS1 and SLC7A1; the complex regulates cell-autonomous L-arginine synthesis and citrulline recycling while channeling extracellular L-arginine to nitric oxide synthesis pathway. Interacts with DMD; localizes NOS1 to sarcolemma in muscle cells. Interacts with DYNLL1; inhibits the nitric oxide synthase activity. It depends on heme b as a cofactor. FAD is required as a cofactor. FMN serves as cofactor. The cofactor is (6R)-L-erythro-5,6,7,8-tetrahydrobiopterin. Ubiquitinated; mediated by STUB1/CHIP in the presence of Hsp70 and Hsp40 (in vitro). Widely expressed in the nervous system: expressed in cerebrum, olfactory bulb, hippocampus, midbrain, cerebellum, pons, medulla oblongata, and spinal cord. Also found in skeletal muscle, where it is localized beneath the sarcolemma of fast twitch muscle fibers, and in spleen, heart, kidney, and liver. N-NOS-1 and N-NOS-2 are found in all parts of the nervous system. NNOS beta and gamma occur in a region-specific manner in the brain and NNOS beta expression is developmentally regulated. NNOS Mu is only found in mature skeletal and cardiac muscles.

The protein resides in the cell membrane. It is found in the sarcolemma. The protein localises to the cell projection. Its subcellular location is the dendritic spine. It carries out the reaction 2 L-arginine + 3 NADPH + 4 O2 + H(+) = 2 L-citrulline + 2 nitric oxide + 3 NADP(+) + 4 H2O. Stimulated by calcium/calmodulin. Inhibited by DYNLL1 that prevents the dimerization of the protein. Inhibited by NOSIP. Its function is as follows. Produces nitric oxide (NO) which is a messenger molecule with diverse functions throughout the body. In the brain and peripheral nervous system, NO displays many properties of a neurotransmitter. Probably has nitrosylase activity and mediates cysteine S-nitrosylation of cytoplasmic target proteins such SRR. Isoform NNOS Mu may be an effector enzyme for the dystrophin complex. The polypeptide is Nitric oxide synthase 1 (Mus musculus (Mouse)).